We begin with the raw amino-acid sequence, 65 residues long: Large ribosomal subunit protein bL35 (65 aa).

It belongs to the bacterial ribosomal protein bL35 family.

The sequence is that of Large ribosomal subunit protein bL35 from Karelsulcia muelleri (strain GWSS) (Sulcia muelleri).